Here is a 503-residue protein sequence, read N- to C-terminus: MSAIRPEEISSLIKERIANFKSEIEVVDVGTVIQVGDGIARVHGLEKAMQGELLEFQNGVMGMVLNLEEDNVGVVIMGPFRDIKEGDTVKRTGRVMEVPVGEALLGRVVNPLGQPIDGQGPIANNGFRPIESPAPGVMARKSVHEPLQTGIKAIDAMIPVGRGQRELIIGDRQTGKTAVALDTIINQKGKDMICIYVAIGQKQSTVANIVETLRKAGALEYTIIVSATASDPAPMLYLAPYTGVTMAEYFMYKGGHVLCVYDDLSKQAAAYREMSLLLRRPPGREAYPGDVFYLHSRLLERAAKLSDDLGAGSITALPFIETQAGDISAYIPTNVISITDGQIFLETDLFNAGQRPAVNTGLSVSRVGGSAQIKAMKKVAGPLKLELAQYRELAAFAQFGSDLDKATQARLTRGERLMEIMKQGQFDPMPVEKQVASIYSATRGFLDDIPVAEVRRFEKEMLSFLDSNKPQLLEHIRTTKDLPDEKEFNAAIEEFKKGFSVTR.

170–177 provides a ligand contact to ATP; sequence GDRQTGKT.

It belongs to the ATPase alpha/beta chains family. As to quaternary structure, F-type ATPases have 2 components, CF(1) - the catalytic core - and CF(0) - the membrane proton channel. CF(1) has five subunits: alpha(3), beta(3), gamma(1), delta(1), epsilon(1). CF(0) has three main subunits: a(1), b(2) and c(9-12). The alpha and beta chains form an alternating ring which encloses part of the gamma chain. CF(1) is attached to CF(0) by a central stalk formed by the gamma and epsilon chains, while a peripheral stalk is formed by the delta and b chains.

The protein resides in the cell membrane. It catalyses the reaction ATP + H2O + 4 H(+)(in) = ADP + phosphate + 5 H(+)(out). Functionally, produces ATP from ADP in the presence of a proton gradient across the membrane. The alpha chain is a regulatory subunit. This is ATP synthase subunit alpha from Brevibacillus brevis (strain 47 / JCM 6285 / NBRC 100599).